A 416-amino-acid polypeptide reads, in one-letter code: Enterobactin exporter EntS (416 aa).

Residues methionine 1–alanine 21 lie on the Cytoplasmic side of the membrane. The helical transmembrane segment at valine 22–valine 42 threads the bilayer. Over glutamine 43–glycine 55 the chain is Periplasmic. Residues leucine 56–alanine 76 form a helical membrane-spanning segment. Residues aspartate 77–lysine 83 are Cytoplasmic-facing. A helical membrane pass occupies residues valine 84–leucine 104. Over leucine 105–serine 109 the chain is Periplasmic. Residues leucine 110–alanine 130 traverse the membrane as a helical segment. The Cytoplasmic portion of the chain corresponds to leucine 131 to arginine 156. A helical transmembrane segment spans residues leucine 157–tryptophan 177. Position 178 (asparagine 178) is a topological domain, periplasmic. Residues tyrosine 179–leucine 199 form a helical membrane-spanning segment. The Cytoplasmic segment spans residues proline 200–arginine 218. The helical transmembrane segment at phenylalanine 219–alanine 239 threads the bilayer. The Periplasmic segment spans residues serine 240 to serine 256. Residues alanine 257–threonine 277 form a helical membrane-spanning segment. Residues serine 278–proline 287 lie on the Cytoplasmic side of the membrane. A helical transmembrane segment spans residues glycine 288–leucine 307. Over methionine 308–leucine 313 the chain is Periplasmic. The helical transmembrane segment at glycine 314–leucine 336 threads the bilayer. The Cytoplasmic portion of the chain corresponds to glutamine 337–asparagine 356. Residues valine 357 to valine 377 traverse the membrane as a helical segment. Residue alanine 378 is a topological domain, periplasmic. Residues serine 379–valine 399 form a helical membrane-spanning segment. The Cytoplasmic portion of the chain corresponds to glutamate 400–glycine 416.

It belongs to the major facilitator superfamily. EntS (TC 2.A.1.38) family.

The protein resides in the cell inner membrane. Functionally, component of an export pathway for enterobactin. The protein is Enterobactin exporter EntS of Escherichia coli O157:H7.